A 464-amino-acid chain; its full sequence is L-aspartate oxidase (464 aa).

Residues 8–11 and 37–44 contribute to the FAD site; these read SGLA and NSYLAQAG. The Proton donor/acceptor role is filled by R248. FAD contacts are provided by residues E329 and 345-346; that span reads SL.

Belongs to the FAD-dependent oxidoreductase 2 family. NadB subfamily. It depends on FAD as a cofactor.

It localises to the cytoplasm. The enzyme catalyses L-aspartate + O2 = iminosuccinate + H2O2. Its pathway is cofactor biosynthesis; NAD(+) biosynthesis; iminoaspartate from L-aspartate (oxidase route): step 1/1. In terms of biological role, catalyzes the oxidation of L-aspartate to iminoaspartate, the first step in the de novo biosynthesis of NAD(+). This chain is L-aspartate oxidase (nadB), found in Pyrococcus furiosus (strain ATCC 43587 / DSM 3638 / JCM 8422 / Vc1).